We begin with the raw amino-acid sequence, 943 residues long: Translation initiation factor IF-2 (943 aa).

Positions Met-35–Pro-359 are disordered. Positions Lys-57 to Ala-76 are enriched in low complexity. 2 stretches are compositionally biased toward basic and acidic residues: residues Ser-92–Gln-103 and Ala-110–Asp-124. Over residues Ser-130–Gln-141 the composition is skewed to polar residues. The segment covering Thr-142–Arg-190 has biased composition (low complexity). Basic and acidic residues-rich tracts occupy residues Ser-191–Asn-205, Ala-239–Ala-250, and Lys-259–Thr-271. Composition is skewed to low complexity over residues Pro-289–Ala-299 and Asn-315–Arg-330. Over residues Asn-331–Gln-342 the composition is skewed to basic residues. Positions Pro-346 to Leu-358 are enriched in basic and acidic residues. Positions Pro-444–Lys-613 constitute a tr-type G domain. The segment at Gly-453–Thr-460 is G1. Gly-453–Thr-460 is a GTP binding site. The G2 stretch occupies residues Gly-478–His-482. Residues Asp-499–Gly-502 are G3. Residues Asp-499–His-503 and Asn-553–Asp-556 contribute to the GTP site. Residues Asn-553 to Asp-556 are G4. The G5 stretch occupies residues Ser-589–Lys-591.

Belongs to the TRAFAC class translation factor GTPase superfamily. Classic translation factor GTPase family. IF-2 subfamily.

The protein resides in the cytoplasm. In terms of biological role, one of the essential components for the initiation of protein synthesis. Protects formylmethionyl-tRNA from spontaneous hydrolysis and promotes its binding to the 30S ribosomal subunits. Also involved in the hydrolysis of GTP during the formation of the 70S ribosomal complex. In Lacticaseibacillus paracasei (strain ATCC 334 / BCRC 17002 / CCUG 31169 / CIP 107868 / KCTC 3260 / NRRL B-441) (Lactobacillus paracasei), this protein is Translation initiation factor IF-2.